The sequence spans 933 residues: Phosphoenolpyruvate carboxylase (933 aa).

Active-site residues include histidine 164 and lysine 595.

This sequence belongs to the PEPCase type 1 family. The cofactor is Mg(2+).

It catalyses the reaction oxaloacetate + phosphate = phosphoenolpyruvate + hydrogencarbonate. Forms oxaloacetate, a four-carbon dicarboxylic acid source for the tricarboxylic acid cycle. The polypeptide is Phosphoenolpyruvate carboxylase (Rhodopseudomonas palustris (strain BisB5)).